We begin with the raw amino-acid sequence, 327 residues long: Gonadotropin-releasing hormone receptor (327 aa).

Residues 1–37 (MASASPEQNQNHCSAVNNSNMLMQGNLPTLTLSGKIR) are Extracellular-facing. Asn-17 is a glycosylation site (N-linked (GlcNAc...) asparagine). A helical membrane pass occupies residues 38–57 (VTVTFFLFLLSTIFNASFLL). Over 58-76 (KLQKWTQKKEKGKKLSRMK) the chain is Cytoplasmic. The helical transmembrane segment at 77–96 (VLLKHLTLANLLETLIVMPL) threads the bilayer. At 97–114 (DGMWNITVQWYAGEFLCK) the chain is on the extracellular side. A glycan (N-linked (GlcNAc...) asparagine) is linked at Asn-101. Cysteines 113 and 195 form a disulfide. A helical transmembrane segment spans residues 115 to 136 (VLSYLKLFSMYAPAFMMVVISL). The Cytoplasmic portion of the chain corresponds to 137-163 (DRSLAITRPLAMKNNGKLGQSMIGLAW). Residues 164–183 (LLSGIFAGPQLYIFRMIHLA) traverse the membrane as a helical segment. Topologically, residues 184 to 211 (DSSGQTEGFPQCVTHCSFPQWWHQAFYN) are extracellular. The chain crosses the membrane as a helical span at residues 212–231 (FFTFSCLFIIPLFITLICNA). At 232–280 (KIIFTLTRVLHQDPHELQLNQSKNNIPRARLRTLKMTVAFATSFTVCWT) the chain is on the cytoplasmic side. Residues 281–299 (PYYVLGIWYWFDPEMLNRV) traverse the membrane as a helical segment. Over 300–305 (SDPVNH) the chain is Extracellular. A helical transmembrane segment spans residues 306–325 (FFFLFALLNPCFDPLIYGYF). Residues 326–327 (SL) are Cytoplasmic-facing.

Belongs to the G-protein coupled receptor 1 family.

It localises to the cell membrane. Its function is as follows. Receptor for gonadotropin releasing hormone (GnRH) that mediates the action of GnRH to stimulate the secretion of the gonadotropic hormones luteinizing hormone (LH) and follicle-stimulating hormone (FSH). This receptor mediates its action by association with G-proteins that activate a phosphatidylinositol-calcium second messenger system. This Canis lupus familiaris (Dog) protein is Gonadotropin-releasing hormone receptor (GNRHR).